Here is a 428-residue protein sequence, read N- to C-terminus: Trigger factor (428 aa).

The PPIase FKBP-type domain occupies 163–248; the sequence is GDTAVIDFEG…IKEIKVKELP (86 aa).

It belongs to the FKBP-type PPIase family. Tig subfamily.

The protein resides in the cytoplasm. The catalysed reaction is [protein]-peptidylproline (omega=180) = [protein]-peptidylproline (omega=0). Functionally, involved in protein export. Acts as a chaperone by maintaining the newly synthesized protein in an open conformation. Functions as a peptidyl-prolyl cis-trans isomerase. The sequence is that of Trigger factor from Ruminiclostridium cellulolyticum (strain ATCC 35319 / DSM 5812 / JCM 6584 / H10) (Clostridium cellulolyticum).